The sequence spans 288 residues: Small ribosomal subunit protein uS2 (288 aa).

Positions 259-276 (EAAPAAEEAPAAEAEAAA) are enriched in low complexity. Residues 259-288 (EAAPAAEEAPAAEAEAAATDTSSESDKTEA) form a disordered region.

The protein belongs to the universal ribosomal protein uS2 family.

This Maricaulis maris (strain MCS10) (Caulobacter maris) protein is Small ribosomal subunit protein uS2.